The chain runs to 428 residues: Serine--tRNA ligase (428 aa).

L-serine is bound at residue 231-233 (TAE). 262 to 264 (RSE) provides a ligand contact to ATP. Position 285 (Glu285) interacts with L-serine. Residue 349–352 (EISS) participates in ATP binding. Residue Ser385 participates in L-serine binding.

The protein belongs to the class-II aminoacyl-tRNA synthetase family. Type-1 seryl-tRNA synthetase subfamily. As to quaternary structure, homodimer. The tRNA molecule binds across the dimer.

It localises to the cytoplasm. The catalysed reaction is tRNA(Ser) + L-serine + ATP = L-seryl-tRNA(Ser) + AMP + diphosphate + H(+). The enzyme catalyses tRNA(Sec) + L-serine + ATP = L-seryl-tRNA(Sec) + AMP + diphosphate + H(+). It functions in the pathway aminoacyl-tRNA biosynthesis; selenocysteinyl-tRNA(Sec) biosynthesis; L-seryl-tRNA(Sec) from L-serine and tRNA(Sec): step 1/1. Functionally, catalyzes the attachment of serine to tRNA(Ser). Is also able to aminoacylate tRNA(Sec) with serine, to form the misacylated tRNA L-seryl-tRNA(Sec), which will be further converted into selenocysteinyl-tRNA(Sec). The protein is Serine--tRNA ligase of Staphylococcus carnosus (strain TM300).